A 385-amino-acid polypeptide reads, in one-letter code: DNA replication and repair protein RecF (385 aa).

30–37 (GPNGYGKT) contacts ATP.

This sequence belongs to the RecF family.

It is found in the cytoplasm. Functionally, the RecF protein is involved in DNA metabolism; it is required for DNA replication and normal SOS inducibility. RecF binds preferentially to single-stranded, linear DNA. It also seems to bind ATP. This is DNA replication and repair protein RecF from Mycobacterium bovis (strain ATCC BAA-935 / AF2122/97).